A 261-amino-acid polypeptide reads, in one-letter code: Tryptophan synthase alpha chain (261 aa).

Catalysis depends on proton acceptor residues Glu-49 and Asp-60.

This sequence belongs to the TrpA family. Tetramer of two alpha and two beta chains.

The catalysed reaction is (1S,2R)-1-C-(indol-3-yl)glycerol 3-phosphate + L-serine = D-glyceraldehyde 3-phosphate + L-tryptophan + H2O. It participates in amino-acid biosynthesis; L-tryptophan biosynthesis; L-tryptophan from chorismate: step 5/5. In terms of biological role, the alpha subunit is responsible for the aldol cleavage of indoleglycerol phosphate to indole and glyceraldehyde 3-phosphate. In Roseiflexus sp. (strain RS-1), this protein is Tryptophan synthase alpha chain.